The following is a 258-amino-acid chain: Thiamine thiazole synthase (258 aa).

Residues A36, 55–56 (EK), G63, V127, and 154–156 (HVD) each bind NAD(+). Fe cation is bound by residues D156 and H171. An NAD(+)-binding site is contributed by M224. Glycine is bound at residue R234.

This sequence belongs to the THI4 family. Homooctamer; tetramer of dimers. The cofactor is Fe(2+).

The catalysed reaction is hydrogen sulfide + glycine + NAD(+) = ADP-5-ethyl-4-methylthiazole-2-carboxylate + nicotinamide + 3 H2O + H(+). It participates in cofactor biosynthesis; thiamine diphosphate biosynthesis. In terms of biological role, involved in the biosynthesis of the thiazole moiety of thiamine. Catalyzes the conversion of NAD and glycine to adenosine diphosphate 5-(2-hydroxyethyl)-4-methylthiazole-2-carboxylate (ADT), an adenylated thiazole intermediate, using free sulfide as a source of sulfur. The protein is Thiamine thiazole synthase of Methanococcoides burtonii (strain DSM 6242 / NBRC 107633 / OCM 468 / ACE-M).